Consider the following 583-residue polypeptide: uncharacterized protein (583 aa).

A compositionally biased stretch (polar residues) spans 1 to 38 (MGQGESIPSRQIQRDASMQAVSSESENINDSDRQNSGF). 4 disordered regions span residues 1 to 39 (MGQG…SGFS), 53 to 124 (GLRR…AIPQ), 156 to 197 (TQNN…TAIG), and 362 to 452 (NSGS…QTDH). Residues 70-80 (GNRDRTTERSA) are compositionally biased toward basic and acidic residues. Residues 88–102 (SLLNRNSPSLRSLSP) show a composition bias toward low complexity. Composition is skewed to polar residues over residues 156-165 (TQNNQSTLAS), 172-191 (VSSS…NLES), 384-408 (LISS…NENV), and 420-452 (ASTA…QTDH). An RING-type zinc finger spans residues 525 to 568 (CLVCLSNFELNDECRRLKQCNHFFHRECIDQWLTSSQNSCPLCR). S580 bears the Phosphoserine mark.

The protein resides in the membrane. This is an uncharacterized protein from Schizosaccharomyces pombe (strain 972 / ATCC 24843) (Fission yeast).